The primary structure comprises 398 residues: O-methyltransferase hmp5 (398 aa).

Residues 233-234 (GG), Glu261, and 283-284 (DF) contribute to the S-adenosyl-L-methionine site. His303 (proton acceptor) is an active-site residue.

This sequence belongs to the class I-like SAM-binding methyltransferase superfamily. Cation-independent O-methyltransferase family.

It functions in the pathway secondary metabolite biosynthesis. Functionally, O-methyltransferase; part of the gene cluster that mediates the biosynthesis of hypothemycin, a resorcylic acid lactone (RAL) that irreversibly inhibits a subset of protein kinases with a conserved cysteine in the ATP binding site such as human ERK2. The first step is performed by both PKSs hmp3 and hmp8 and leads to the production of 7',8'-dehydrozearalenol (DHZ). The highly reducing PKS hpm8 synthesizes the reduced hexaketide (7S,11S,2E,8E)-7,11-dihydroxy-dodeca-2,8-dienoate, which is transferred downstream to the non-reducing PKS hpm3. Hpm3 then extends the reduced hexaketide to a nonaketide, after which regioselective cyclization and macrolactonization affords DHZ. The next step is the conversion of DHZ into aigialomycin C and is performed by the O-methyltransferase hmp5, the FAD-binding monooxygenase hmp7, and the cytochrome P450 monooxygenase hmp1. The wide substrate tolerance of the hmp5 and hmp7 implies that the reactions from DHZ to aigialomycin C can occur in any order. The steps from aigialomycin C to hypothemycin are less well established. The FAD-linked oxidoreductase hmp9 presumably catalyzes oxidation of the C-6' hydroxyl to a ketone. The timing of this oxidation is important, since the resulting enone functional group is a Michael acceptor that can react spontaneously with glutathione, an abundant metabolite in fungal cells. The glutathione S-transferase hmp2 catalyzes cis-trans isomerization of the 7',8' double bond with equilibrium favoring the trans isomer. The hpm6-encoded transporter might preferentially pump hypothemycin out of the cell relative to the trans isomer aigialomycin A. The cis-to-trans isomerization may be coupled with C-4' hydroxylation, since all known hypothemycin analogs containing the enone functional group also have hydroxyl groups at both C-4' and C-5'. The polypeptide is O-methyltransferase hmp5 (Hypomyces subiculosus (Nectria subiculosa)).